The chain runs to 239 residues: UPF0173 metal-dependent hydrolase Dvul_0081 (239 aa).

The protein belongs to the UPF0173 family.

The protein is UPF0173 metal-dependent hydrolase Dvul_0081 of Nitratidesulfovibrio vulgaris (strain DP4) (Desulfovibrio vulgaris).